Consider the following 2931-residue polypeptide: Probable polyketide synthase 9/36 (2931 aa).

Residues 11 to 442 (EKGVAIVGIG…GSNCCLLISE (432 aa)) enclose the Ketosynthase family 3 (KS3) domain. Active-site for beta-ketoacyl synthase activity residues include Cys-181, His-323, and His-362. Residues 635–668 (GVNPSFILGHSLGEISASYCSGMIDLDTFCYTVY) are acyl/malonyl transferase. Catalysis depends on Ser-645, which acts as the For acyl/malonyl transferase activity. Residues 925–1047 (IDHLGTSNSY…ANFQLLDHGN (123 aa)) are N-terminal hotdog fold. A PKS/mFAS DH domain is found at 925–1209 (IDHLGTSNSY…CKSLIPIKDS (285 aa)). The active-site Proton acceptor; for dehydratase activity is the His-959. The interval 1064–1209 (NLSKLTKNEL…CKSLIPIKDS (146 aa)) is C-terminal hotdog fold. The active-site Proton donor; for dehydratase activity is the Asp-1122. A helical transmembrane segment spans residues 2293-2313 (LINFVMASSAISLIGSTDLCT). Residues 2429–2506 (TGNKNIDELF…TSMKMILNSL (78 aa)) form the Carrier domain. At Ser-2466 the chain carries O-(pantetheine 4'-phosphoryl)serine. Residues 2553–2573 (KIILLTGTTGFLGGFLLFNMV) form a helical membrane-spanning segment.

The cofactor is pantetheine 4'-phosphate.

The protein resides in the membrane. Functionally, probable polyketide synthase. This is Probable polyketide synthase 9/36 (pks9) from Dictyostelium discoideum (Social amoeba).